The following is an 80-amino-acid chain: Conotoxin Ca11.3 (80 aa).

The N-terminal stretch at methionine 1 to glycine 19 is a signal peptide. Residues alanine 20–lysine 42 constitute a propeptide that is removed on maturation. 4 disulfide bridges follow: cysteine 46–cysteine 60, cysteine 53–cysteine 65, cysteine 59–cysteine 72, and cysteine 64–cysteine 79.

Belongs to the conotoxin I3 superfamily. In terms of tissue distribution, expressed by the venom duct.

The protein localises to the secreted. This chain is Conotoxin Ca11.3, found in Conus caracteristicus (Characteristic cone).